We begin with the raw amino-acid sequence, 529 residues long: Delayed-rectifier potassium channel regulatory subunit KCNS1 (529 aa).

At 1–217 (MLMLLVRGTH…LTMENPGYSL (217 aa)) the chain is on the cytoplasmic side. The chain crosses the membrane as a helical span at residues 218-239 (PSKLFSCVSISVVLASIAAMCI). Residues 240-270 (HSLPEYQAREAAAAVAAVAAGRSPEGVRDDP) lie on the Extracellular side of the membrane. The helical transmembrane segment at 271–293 (VLRRLEYFCIAWFSFEVSSRLLL) threads the bilayer. Residues 294 to 304 (APSTRNFFCHP) lie on the Cytoplasmic side of the membrane. A helical transmembrane segment spans residues 305–322 (LNLIDIVSVLPFYLTLLA). Over 323-340 (GVALGDQGGTGGKELGHL) the chain is Extracellular. A helical; Voltage-sensor membrane pass occupies residues 341 to 361 (GKVVQVFRLMRIFRVLKLARH). The Cytoplasmic portion of the chain corresponds to 362–376 (STGLRSLGATLKHSY). Residues 377–398 (REVGILLLYLAVGVSVFSGVAY) traverse the membrane as a helical segment. Over 399 to 411 (TAEKEEDVGFNTI) the chain is Extracellular. An intramembrane region (helical) is located at residues 412–423 (PACWWWGTVSMT). The short motif at 424–429 (TVGYGD) is the Selectivity filter element. An intramembrane segment occupies 424-431 (TVGYGDVV). Topologically, residues 432–438 (PVTVAGK) are extracellular. A helical membrane pass occupies residues 439 to 467 (LAASGCILGGILVVALPITIIFNKFSHFY). Residues 468-529 (RRQKALEAAV…PSEPPHPQMY (62 aa)) lie on the Cytoplasmic side of the membrane. Positions 494–529 (GVSEASLETSRETSQEGRSADLETQAPSEPPHPQMY) are disordered. The span at 502–514 (TSRETSQEGRSAD) shows a compositional bias: basic and acidic residues.

The protein belongs to the potassium channel family. S (TC 1.A.1.2) subfamily. Kv9.1/KCNS1 sub-subfamily. In terms of assembly, heterotetramer with KCNB1. Heterotetramer with KCNB2. Does not form homomultimers.

Its subcellular location is the cell membrane. In terms of biological role, potassium channel regulatory subunit that modulate the delayed rectifier voltage-gated potassium channel activity of KCNB1 and KCNB2 by altering their kinetics, expression levels, and shifting the half-inactivation potential to more polarized values. While it does not form functional channels on its own, it can form functional heterotetrameric channels with KCNB1 and KCNB2. Each regulatory subunit has unique regulatory properties that can lead to extensive inhibition, significant changes in kinetics, and/or substantial shifts in the voltage dependencies of the inactivation process. The chain is Delayed-rectifier potassium channel regulatory subunit KCNS1 from Chlorocebus aethiops (Green monkey).